The following is a 1231-amino-acid chain: Multifunctional 2-oxoglutarate metabolism enzyme (1231 aa).

Residues 1 to 41 are 2-oxoglutarate dehydrogenase E1, N-terminal part; it reads MANISSPFGQNEWLVEEMYRKFRDDPSSVDPSWHEFLVDYS. The interval 38–79 is disordered; it reads VDYSPEPTSQPAAEPTRVTSPLVAERAAAAAPQAPPKPADTA. Residues 42–88 form a linker region; it reads PEPTSQPAAEPTRVTSPLVAERAAAAAPQAPPKPADTAAAGNGVVAA. The segment covering 58–69 has biased composition (low complexity); sequence PLVAERAAAAAP. Positions 89–337 are succinyltransferase E2; sequence LAAKTAVPPP…LRTIHELLLS (249 aa). His-316 (proton acceptor; for succinyltransferase activity) is an active-site residue. Residues 338-1231 are 2-oxoglutarate dehydrogenase E1, C-terminal part; sequence DGFWDEVFRE…QQEILDEAFG (894 aa). Arg-542 is a thiamine diphosphate binding site. Residues His-581 and Ser-606 each coordinate 2-oxoglutarate. The thiamine diphosphate site is built by Ser-606, Leu-608, Asp-649, Ala-650, Ala-651, and Asn-682. Residue Asp-649 coordinates Mg(2+). Residues Asn-682 and Ile-684 each contribute to the Mg(2+) site. Positions 787 to 817 form a coiled coil; it reads DISMKEAEDALRDYQGQLERVFNEVRELEKH. Position 1024 (His-1024) interacts with 2-oxoglutarate. Thr-1042, Arg-1058, Lys-1093, Ser-1096, Gln-1146, Arg-1153, and Arg-1154 together coordinate acetyl-CoA.

This sequence belongs to the 2-oxoacid dehydrogenase family. Kgd subfamily. In terms of assembly, homodimer. The 2-oxoglutarate dehydrogenase (ODH) complex contains multiple copies of three enzymatic components: 2-oxoglutarate dehydrogenase (E1), dihydrolipoamide succinyltransferase (E2) and lipoamide dehydrogenase (E3). The cofactor is Mg(2+). It depends on thiamine diphosphate as a cofactor.

It catalyses the reaction glyoxylate + 2-oxoglutarate + H(+) = 2-hydroxy-3-oxoadipate + CO2. The catalysed reaction is 2-oxoglutarate + H(+) = succinate semialdehyde + CO2. It carries out the reaction N(6)-[(R)-lipoyl]-L-lysyl-[protein] + 2-oxoglutarate + H(+) = N(6)-[(R)-S(8)-succinyldihydrolipoyl]-L-lysyl-[protein] + CO2. The enzyme catalyses N(6)-[(R)-dihydrolipoyl]-L-lysyl-[protein] + succinyl-CoA = N(6)-[(R)-S(8)-succinyldihydrolipoyl]-L-lysyl-[protein] + CoA. Its pathway is carbohydrate metabolism; tricarboxylic acid cycle; succinate from 2-oxoglutarate (transferase route): step 1/2. It functions in the pathway carbohydrate metabolism; tricarboxylic acid cycle; succinyl-CoA from 2-oxoglutarate (dehydrogenase route): step 1/1. Alpha-ketoglutarate dehydrogenase and decarboxylase activities are inhibited by unphosphorylated GarA, and allosterically activated by acetyl-CoA, the main substrate of the TCA cycle. Its function is as follows. Shows three enzymatic activities that share a first common step, the attack of thiamine-PP on 2-oxoglutarate (alpha-ketoglutarate, KG), leading to the formation of an enamine-thiamine-PP intermediate upon decarboxylation. Thus, displays KGD activity, catalyzing the decarboxylation from five-carbon 2-oxoglutarate to four-carbon succinate semialdehyde (SSA). Also catalyzes C-C bond formation between the activated aldehyde formed after decarboxylation of alpha-ketoglutarate and the carbonyl of glyoxylate (GLX), to yield 2-hydroxy-3-oxoadipate (HOA), which spontaneously decarboxylates to form 5-hydroxylevulinate (HLA). And is also a component of the 2-oxoglutarate dehydrogenase (ODH) complex, that catalyzes the overall conversion of 2-oxoglutarate to succinyl-CoA and CO(2). The KG decarboxylase and KG dehydrogenase reactions provide two alternative, tightly regulated, pathways connecting the oxidative and reductive branches of the TCA cycle. This is Multifunctional 2-oxoglutarate metabolism enzyme (kgd) from Mycobacterium tuberculosis (strain ATCC 25177 / H37Ra).